The chain runs to 108 residues: Ferredoxin, plant-type (108 aa).

In terms of domain architecture, 2Fe-2S ferredoxin-type spans 5 to 96 (FEITVQPGGE…DLCIERYSKP (92 aa)). The [2Fe-2S] cluster site is built by cysteine 40, cysteine 45, cysteine 48, and cysteine 80.

It belongs to the 2Fe2S plant-type ferredoxin family.

The protein operates within aromatic compound metabolism; catechol degradation. Functionally, ferredoxins are iron-sulfur proteins that transfer electrons in a wide variety of metabolic reactions. This Pseudomonas putida (Arthrobacter siderocapsulatus) protein is Ferredoxin, plant-type (nahT).